The sequence spans 640 residues: Auxin efflux carrier component 3 (640 aa).

Residues 1–7 (MISWHDL) are Extracellular-facing. The helical transmembrane segment at 8-28 (YTVLTAVIPLYVAMILAYGSV) threads the bilayer. Residues 29–38 (RWWKIFSPDQ) lie on the Cytoplasmic side of the membrane. The chain crosses the membrane as a helical span at residues 39–59 (CSGINRFVAIFAVPLLSFHFI). Residue valine 51 participates in (indol-3-yl)acetate binding. At 60–71 (STNNPYAMNLRF) the chain is on the extracellular side. The chain crosses the membrane as a helical span at residues 72-92 (IAADTLQKIIMLSLLVLWANF). Residues 93 to 101 (TRSGSLEWS) lie on the Cytoplasmic side of the membrane. Residues 102 to 122 (ITIFSLSTLPNTLVMGIPLLI) form a helical membrane-spanning segment. (indol-3-yl)acetate contacts are provided by asparagine 112 and leucine 114. At 123 to 131 (AMYGEYSGS) the chain is on the extracellular side. A helical membrane pass occupies residues 132 to 152 (LMVQIVVLQCIIWYTLLLFLF). Residue tyrosine 145 participates in (indol-3-yl)acetate binding. The Cytoplasmic segment spans residues 153–500 (EFRGAKMLIM…LIRNPNTYSS (348 aa)). A phosphoserine mark is found at serine 226, serine 243, and serine 283. The tract at residues 310 to 351 (APNPEFSSTTTSTANKSVNKNPKDVNTNQQTTLPTGGKSNSH) is disordered. Over residues 314–348 (EFSSTTTSTANKSVNKNPKDVNTNQQTTLPTGGKS) the composition is skewed to polar residues. Phosphothreonine is present on threonine 322. Position 366 is a phosphoserine (serine 366). Disordered regions lie at residues 372–391 (AGLN…RSDQ) and 404–471 (SHNG…SQRK). Basic and acidic residues predominate over residues 430–442 (GKEEEAERPKDAE). The span at 449–460 (APNSTAALQSKT) shows a compositional bias: polar residues. The chain crosses the membrane as a helical span at residues 501–521 (LIGLIWALVAFRWHVAMPKII). At 522 to 524 (QQS) the chain is on the extracellular side. A helical membrane pass occupies residues 525-545 (ISILSDAGLGMAMFSLGLFMA). The Cytoplasmic segment spans residues 546–559 (LQPKLIACGNSVAT). A helical membrane pass occupies residues 560 to 580 (FAMAVRFLTGPAVMAVAAIAI). Residues 581–585 (GLRGD) are Extracellular-facing. Residues 586–606 (LLRVAIVQAALPQGIVPFVFA) form a helical membrane-spanning segment. (indol-3-yl)acetate-binding residues include isoleucine 600 and valine 601. Residues 607–619 (KEYNVHPAILSTG) lie on the Cytoplasmic side of the membrane. Residues 620 to 640 (VIFGMLIALPITLVYYILLGL) traverse the membrane as a helical segment.

This sequence belongs to the auxin efflux carrier (TC 2.A.69.1) family. In terms of assembly, homodimer. In terms of tissue distribution, predominantly expressed at the lateral side of shoot endodermis cells as well as root pericycle and columella cells.

Its subcellular location is the cell membrane. With respect to regulation, auxin efflux carrier activity is competitively inhibited by naptalamate (N-1-naphthylphthalamic acid, NPA). Acts as a component of the auxin efflux carrier; this activity is enhanced when activated by PID-mediated phosphorylation. Seems to be involved in the lateral auxin transport system. Together with PIN4 and PIN7, involved in the connective auxin transport (CAT) that ensures communication across the shoot system, and modulates strigolactone-mediated shoot branching control. Binds auxins including indole-3-acetic acid (IAA). Coordinated polar localization of PIN3 is directly regulated by the vesicle trafficking process. This Arabidopsis thaliana (Mouse-ear cress) protein is Auxin efflux carrier component 3.